The chain runs to 180 residues: ATP-dependent protease subunit HslV (180 aa).

Thr7 is an active-site residue. The Na(+) site is built by Gly165, Cys168, and Thr171.

This sequence belongs to the peptidase T1B family. HslV subfamily. In terms of assembly, a double ring-shaped homohexamer of HslV is capped on each side by a ring-shaped HslU homohexamer. The assembly of the HslU/HslV complex is dependent on binding of ATP.

It is found in the cytoplasm. The catalysed reaction is ATP-dependent cleavage of peptide bonds with broad specificity.. Allosterically activated by HslU binding. In terms of biological role, protease subunit of a proteasome-like degradation complex believed to be a general protein degrading machinery. The protein is ATP-dependent protease subunit HslV of Bacillus cereus (strain ATCC 10987 / NRS 248).